A 366-amino-acid polypeptide reads, in one-letter code: Ribosomal RNA large subunit methyltransferase M (366 aa).

S-adenosyl-L-methionine-binding positions include serine 188, 221 to 224 (CPGG), aspartate 240, aspartate 260, and aspartate 277. Catalysis depends on lysine 306, which acts as the Proton acceptor.

Belongs to the class I-like SAM-binding methyltransferase superfamily. RNA methyltransferase RlmE family. RlmM subfamily. As to quaternary structure, monomer.

It localises to the cytoplasm. It catalyses the reaction cytidine(2498) in 23S rRNA + S-adenosyl-L-methionine = 2'-O-methylcytidine(2498) in 23S rRNA + S-adenosyl-L-homocysteine + H(+). In terms of biological role, catalyzes the 2'-O-methylation at nucleotide C2498 in 23S rRNA. In Salmonella agona (strain SL483), this protein is Ribosomal RNA large subunit methyltransferase M.